The chain runs to 348 residues: Gamma-glutamyl hydrolase 1 (348 aa).

Positions 1-23 are cleaved as a signal peptide; sequence MIDNNCLYKEELNRNSYSGLAKE. The 297-residue stretch at 46-342 folds into the Gamma-glutamyl hydrolase domain; sequence SPDPNLNYRP…RGYDEVYIFT (297 aa). C156 functions as the Nucleophile in the catalytic mechanism. Residue H269 is part of the active site.

It belongs to the peptidase C26 family. Highly expressed in roots and at lower levels in leaves, stems and siliques.

The protein resides in the vacuole. It localises to the secreted. Its subcellular location is the extracellular space. The protein localises to the cell wall. The catalysed reaction is (6S)-5,6,7,8-tetrahydrofolyl-(gamma-L-Glu)(n) + (n-1) H2O = (6S)-5,6,7,8-tetrahydrofolate + (n-1) L-glutamate. Cleaves the polyglutamate sidechains of folate polyglutamates in the vacuole. Is important for polyglutamyl tail length determination before vacuolar exit. Plays a role in folate stability and intracellular folate content. This is Gamma-glutamyl hydrolase 1 (GGH1) from Arabidopsis thaliana (Mouse-ear cress).